Reading from the N-terminus, the 360-residue chain is Farnesyl pyrophosphate synthase (360 aa).

Isopentenyl diphosphate is bound by residues lysine 52, arginine 55, and glutamine 90. Positions 97 and 101 each coordinate Mg(2+). Arginine 106 is a binding site for dimethylallyl diphosphate. Arginine 107 serves as a coordination point for isopentenyl diphosphate. Dimethylallyl diphosphate is bound by residues lysine 194, threonine 195, glutamine 237, lysine 254, and lysine 263.

It belongs to the FPP/GGPP synthase family. Mg(2+) is required as a cofactor.

It catalyses the reaction isopentenyl diphosphate + dimethylallyl diphosphate = (2E)-geranyl diphosphate + diphosphate. The enzyme catalyses isopentenyl diphosphate + (2E)-geranyl diphosphate = (2E,6E)-farnesyl diphosphate + diphosphate. The protein operates within isoprenoid biosynthesis; farnesyl diphosphate biosynthesis; farnesyl diphosphate from geranyl diphosphate and isopentenyl diphosphate: step 1/1. Its pathway is isoprenoid biosynthesis; geranyl diphosphate biosynthesis; geranyl diphosphate from dimethylallyl diphosphate and isopentenyl diphosphate: step 1/1. Functionally, farnesyl pyrophosphate synthase; part of the second module of ergosterol biosynthesis pathway that includes the middle steps of the pathway. The second module involves the formation of farnesyl diphosphate, which is also an important intermediate in the biosynthesis of ubiquinone, dolichol, heme and prenylated proteins. This module also plays a key role in the biosynthesis of triterpenes such as ganoderic acids (GA), a group of highly oxygenated lanostane-type triterpenoids which are well recognized as a main group of unique bioactive compounds in the medicinal mushroom Ganoderma lucidum. Activity by the mevalonate kinase first converts mevalonate into 5-phosphomevalonate. 5-phosphomevalonate is then further converted to 5-diphosphomevalonate by the phosphomevalonate kinase. The diphosphomevalonate decarboxylase MVD then produces isopentenyl diphosphate. The isopentenyl-diphosphate delta-isomerase then catalyzes the 1,3-allylic rearrangement of the homoallylic substrate isopentenyl (IPP) to its highly electrophilic allylic isomer, dimethylallyl diphosphate (DMAPP). Finally the farnesyl diphosphate synthase FPS catalyzes the sequential condensation of isopentenyl pyrophosphate with dimethylallyl pyrophosphate, and then with the resultant geranylpyrophosphate to the ultimate product farnesyl pyrophosphate. In Ganoderma lucidum (Ling zhi medicinal fungus), this protein is Farnesyl pyrophosphate synthase.